The primary structure comprises 142 residues: Putative pre-16S rRNA nuclease (142 aa).

The protein belongs to the YqgF nuclease family.

It is found in the cytoplasm. Functionally, could be a nuclease involved in processing of the 5'-end of pre-16S rRNA. The sequence is that of Putative pre-16S rRNA nuclease from Lawsonia intracellularis (strain PHE/MN1-00).